The sequence spans 454 residues: PC-esterase domain-containing protein 1A (454 aa).

This sequence belongs to the PC-esterase family.

This chain is PC-esterase domain-containing protein 1A (PCED1A), found in Homo sapiens (Human).